A 363-amino-acid polypeptide reads, in one-letter code: Histidinol-phosphate aminotransferase (363 aa).

N6-(pyridoxal phosphate)lysine is present on K215.

The protein belongs to the class-II pyridoxal-phosphate-dependent aminotransferase family. Histidinol-phosphate aminotransferase subfamily. In terms of assembly, homodimer. The cofactor is pyridoxal 5'-phosphate.

It catalyses the reaction L-histidinol phosphate + 2-oxoglutarate = 3-(imidazol-4-yl)-2-oxopropyl phosphate + L-glutamate. The protein operates within amino-acid biosynthesis; L-histidine biosynthesis; L-histidine from 5-phospho-alpha-D-ribose 1-diphosphate: step 7/9. The sequence is that of Histidinol-phosphate aminotransferase from Buchnera aphidicola subsp. Diuraphis noxia.